We begin with the raw amino-acid sequence, 460 residues long: Methylenetetrahydrofolate--tRNA-(uracil-5-)-methyltransferase TrmFO (460 aa).

12-17 provides a ligand contact to FAD; the sequence is GGGLAG.

This sequence belongs to the MnmG family. TrmFO subfamily. It depends on FAD as a cofactor.

The protein localises to the cytoplasm. It catalyses the reaction uridine(54) in tRNA + (6R)-5,10-methylene-5,6,7,8-tetrahydrofolate + NADH + H(+) = 5-methyluridine(54) in tRNA + (6S)-5,6,7,8-tetrahydrofolate + NAD(+). The catalysed reaction is uridine(54) in tRNA + (6R)-5,10-methylene-5,6,7,8-tetrahydrofolate + NADPH + H(+) = 5-methyluridine(54) in tRNA + (6S)-5,6,7,8-tetrahydrofolate + NADP(+). Catalyzes the folate-dependent formation of 5-methyl-uridine at position 54 (M-5-U54) in all tRNAs. The protein is Methylenetetrahydrofolate--tRNA-(uracil-5-)-methyltransferase TrmFO of Crocosphaera subtropica (strain ATCC 51142 / BH68) (Cyanothece sp. (strain ATCC 51142)).